Consider the following 315-residue polypeptide: MTQEFEHLSVLLAETVAGLNIRPDGIYIDGTFGRGGHSRKVLEELGPNGRLIAIDRDPQAIAAAEQFKDDSRFQIVHGGFGQLADYVEDLGLKGQIDGVLLDFGVSSPQLDDAERGFSFLRDGPLDMRMDNSQGETAAQWLARAEIEDMAWVFKTYGEEKNSRHIARCIAADREKAPFLRTKDLADLIARITKNKERNKHPATRVFQAIRIYINSELEQIDQALEGALAVLAPEGRLSVISFHSLEDRMVKRFIRRNSQGESVPHGLPITEAEINKSRKLKAMGKAIKPSVEEVERNARARSSVLRIAERLPYEA.

Residues 35–37, Asp55, Phe80, Asp102, and Gln109 contribute to the S-adenosyl-L-methionine site; that span reads GGH.

The protein belongs to the methyltransferase superfamily. RsmH family.

It is found in the cytoplasm. The enzyme catalyses cytidine(1402) in 16S rRNA + S-adenosyl-L-methionine = N(4)-methylcytidine(1402) in 16S rRNA + S-adenosyl-L-homocysteine + H(+). Specifically methylates the N4 position of cytidine in position 1402 (C1402) of 16S rRNA. The protein is Ribosomal RNA small subunit methyltransferase H of Shewanella pealeana (strain ATCC 700345 / ANG-SQ1).